A 245-amino-acid polypeptide reads, in one-letter code: Phosducin (245 aa).

Positions 1-67 (MEEARRQSLE…SRDDKDSKER (67 aa)) are disordered. Residues 1–241 (MEEARRQSLE…IHALEQTSME (241 aa)) form the Phosducin domain. A compositionally biased stretch (basic and acidic residues) spans 58–67 (SRDDKDSKER). S73 bears the Phosphoserine; by PKA mark. The interval 111-245 (YGFVYELETG…EQTSMEEDVE (135 aa)) is thioredoxin fold.

Belongs to the phosducin family. Forms a complex with the beta and gamma subunits of the GTP-binding protein, transducin. Interacts with CRX. Light-induced changes in cyclic nucleotide levels modulate the phosphorylation of this protein by cAMP kinase.

It localises to the cytoplasm. The protein resides in the cytosol. The protein localises to the nucleus. Its subcellular location is the cell projection. It is found in the cilium. It localises to the photoreceptor outer segment. The protein resides in the photoreceptor inner segment. May participate in the regulation of visual phototransduction or in the integration of photoreceptor metabolism. Inhibits the transcriptional activation activity of the cone-rod homeobox CRX. This Equus caballus (Horse) protein is Phosducin (PDC).